A 125-amino-acid chain; its full sequence is Salivary protein 15 Ipac-1 (125 aa).

The first 15 residues, 1-15, serve as a signal peptide directing secretion; sequence MKVVCIILLFGIAAA. N-linked (GlcNAc...) asparagine glycosylation is found at N82 and N94. The interval 106-125 is CD4-binding; that stretch reads GPSGQTCADKSKCVGHIPGC.

This sequence belongs to the salp15 family. As to quaternary structure, interacts with host CD4. Interacts with host DC-SIGN (CD209). Interacts with Borrelia outer surface protein C (OspC). In terms of tissue distribution, expressed in salivary glands.

The protein resides in the secreted. Functionally, salivary tick protein that downregulates host immune system by binding to both dendritic cells, and CD4(+) T cells. Specifically binds to the CD4 coreceptor on T cells. This interaction prevents the activation of the Src kinase, Lck, and its downstream substrate Zap-70, and results in deficient activation of PLCgamma1, the repression of calcium fluxes triggered by T-cell antigen receptor (TCR) ligation, and a subsequent reduction in interleukin-2 production. This salivary protein also binds to DC-SIGN (CD209) on dendritic cells (DC) and activates the Raf-1 kinase/MEK signaling pathway that results in down-regulating expression of pro-inflammatory cytokines. Furthermore, it inhibits T cell proliferation induced by DCs. It also inhibits in vitro keratinocyte inflammation induced by Borrelia burgdorferi or by the major outer surface protein (OspC) of Borrelia. In addition, it downregulates chemokines and monocyte chemoattractant protein 1, as well as several antimicrobial peptides such as defensins, cathelicidin, psoriasin, and RNase 7. Apart from its immunomodulatory activities, it is also associated with protection of Borrelia spirochetes from antibody-mediated killing through its binding to OspC. In vivo, tests on different immune disease animal models show promising therapeutic results, e.g., in inhibiting HIV infection, experimental autoimmune encephalomyelitis, transplantation rejection, and asthma. This is Salivary protein 15 Ipac-1 from Ixodes pacificus (Western black-legged tick).